Reading from the N-terminus, the 186-residue chain is Low amplitude and bright protein LabA (186 aa).

Its function is as follows. Functions in an output pathway of the circadian clock. One of three clock output pathways. Involved in negative feedback regulation of KaiC; deletion leads to overexpression of KaiC protein and decreases the amplitude of the circadian response. Overexpression reduces the expression of circadian genes. This is Low amplitude and bright protein LabA from Synechococcus elongatus (strain ATCC 33912 / PCC 7942 / FACHB-805) (Anacystis nidulans R2).